Here is a 248-residue protein sequence, read N- to C-terminus: Adenylate kinase (248 aa).

37–42 lines the ATP pocket; it reads GAGKGT. The NMP stretch occupies residues 57–86; it reads SPGNLLREEMNRNSPITAQIKDYVSKGQLV. AMP-binding positions include Arg-63, 84 to 86, 111 to 114, and Gln-118; these read QLV and GFPR. An LID region spans residues 149–181; that stretch reads GRRFDPITGNTYHIIYDPPPPDIADRVVVRTDD. Arg-150 contacts ATP. AMP contacts are provided by Arg-178 and Arg-189.

It belongs to the adenylate kinase family. In terms of assembly, monomer.

It is found in the cytoplasm. The enzyme catalyses AMP + ATP = 2 ADP. In terms of biological role, catalyzes the reversible transfer of the terminal phosphate group between ATP and AMP. Plays an important role in cellular energy homeostasis and in adenine nucleotide metabolism. The chain is Adenylate kinase from Giardia intestinalis (Giardia lamblia).